The following is an 873-amino-acid chain: MQTADTKDKTKLSTGAAEHTPLMKQFFAAKSDYPDLLLFFRMGDFYELFYDDARKAARLLDITLTQRGSSGGAPIPMAGVPVHAYEGYLARLVALGESVAICEQIGDPALAKGLVERKVVRIVTPGTVTDEALLDERRDTLLMAISRSKQGYGLAWADLAGGRFLVNEVDSVDALEAEIARLEPAELLVPDEDNWPEFLRGRVGVRRRPPWLFDADSGRRQLLAFFKLHDLSGFGIDDKPCATAAAGALLGYVEETQKQRLPHLTSIAMEVASEAISMNAATRRHLELDTRVDGDTRNTLLGVLDSTVTPMGGRLLRRWLHRPLRLREVLVQRHHAVGSLIDTGADTDVREAFRALGDLERILTRVALRSARPRDFSTLRDGLALLPKVRTILAPLDSPRLQTLYAELGEHDATAHLLISAVAEQPPLKFSDGGVIATGYDADLDELRRLSTNADQFLIDLEQRERASSGIATLKVGYNRVHGYYIEISKGQAEKAPLHYSRRQTLTNAERYITEELKSFEDKVLSARERSLSREKLLYEGLLDALGGELEGLKRCASALSELDVLAGFAERAQALDWSQPELESAPCLHIERGRHPVVEAVRDQPFEPNDLDLHPDRRMLVITGPNMGGKSTYMRQNALIVLLAHIGSYVPASRAVIGPIDRILTRIGAGDDLARGQSTFMVEMAETSYILHHATPQSLVLMDEIGRGTSTYDGLALADAVARHLAHTNRCYTLFATHYFELTALADASHAGGGSGIANVHLDAVEHGERLVFMHAVKDGPANRSFGLQVAALAGLPKAAVQQARRRLAELEQRGGDSHAAEMAPAALDAPQQFGLFTAPSSAAQEALQALDPDELTPKQALEALYRLKALL.

Residue glycine 625 to serine 632 participates in ATP binding.

Belongs to the DNA mismatch repair MutS family.

Functionally, this protein is involved in the repair of mismatches in DNA. It is possible that it carries out the mismatch recognition step. This protein has a weak ATPase activity. This Xanthomonas campestris pv. campestris (strain 8004) protein is DNA mismatch repair protein MutS.